The sequence spans 504 residues: Cytochrome P450 2D9 (504 aa).

Position 249 is a phosphoserine (serine 249). Heme is bound at residue cysteine 446.

This sequence belongs to the cytochrome P450 family. Heme serves as cofactor.

Its subcellular location is the endoplasmic reticulum membrane. The protein resides in the microsome membrane. It carries out the reaction an organic molecule + reduced [NADPH--hemoprotein reductase] + O2 = an alcohol + oxidized [NADPH--hemoprotein reductase] + H2O + H(+). In terms of biological role, cytochromes P450 are a group of heme-thiolate monooxygenases. In liver microsomes, this enzyme is involved in an NADPH-dependent electron transport pathway. It oxidizes a variety of structurally unrelated compounds, including steroids, fatty acids, and xenobiotics. The chain is Cytochrome P450 2D9 (Cyp2d9) from Mus musculus (Mouse).